The following is a 189-amino-acid chain: Elongation factor P (189 aa).

The protein belongs to the elongation factor P family.

It is found in the cytoplasm. Its pathway is protein biosynthesis; polypeptide chain elongation. Involved in peptide bond synthesis. Stimulates efficient translation and peptide-bond synthesis on native or reconstituted 70S ribosomes in vitro. Probably functions indirectly by altering the affinity of the ribosome for aminoacyl-tRNA, thus increasing their reactivity as acceptors for peptidyl transferase. This is Elongation factor P from Chloroflexus aurantiacus (strain ATCC 29364 / DSM 637 / Y-400-fl).